The primary structure comprises 928 residues: Zinc metalloproteinase nas-39 (928 aa).

Positions 1–30 (MRFSANIAIIVNIIFLFIVVEFVLPTFIRS) are cleaved as a signal peptide. Positions 48 to 247 (AATAKKERIW…RQTKKLYKCA (200 aa)) constitute a Peptidase M12A domain. Residues Asn-69 and Asn-87 are each glycosylated (N-linked (GlcNAc...) asparagine). Cystine bridges form between Cys-90–Cys-246, Cys-111–Cys-133, Cys-113–Cys-114, and Cys-249–Cys-268. His-141 contacts Zn(2+). Glu-142 is an active-site residue. Residues His-145 and His-151 each coordinate Zn(2+). 2 consecutive CUB domains span residues 249–359 (CGGT…YAIC) and 360–476 (GGPI…FTKE). Residue Asn-283 is glycosylated (N-linked (GlcNAc...) asparagine). Cystine bridges form between Cys-359-Cys-385, Cys-412-Cys-439, Cys-480-Cys-491, Cys-487-Cys-500, Cys-502-Cys-515, and Cys-519-Cys-545. The 40-residue stretch at 477–516 (LNECATDKNICHHYCVNTVGGFKCACRVGYSLSSNGFSCD) folds into the EGF-like 1; calcium-binding domain. The CUB 3 domain maps to 519–625 (CGGYLKASNG…DGFFANFIAD (107 aa)). Residues Asn-527 and Asn-560 are each glycosylated (N-linked (GlcNAc...) asparagine). Intrachain disulfides connect Cys-573–Cys-587, Cys-629–Cys-640, Cys-636–Cys-649, Cys-651–Cys-664, Cys-669–Cys-695, Cys-722–Cys-744, Cys-782–Cys-812, and Cys-840–Cys-863. The EGF-like 2; calcium-binding domain maps to 626–665 (FDECQNDNAGCEHTCQNRLGSYVCTCNPGYILAEDKHNCK). CUB domains lie at 669–781 (CFFE…YTSL) and 782–900 (CGGR…YREA). N-linked (GlcNAc...) asparagine glycosylation occurs at Asn-694. Positions 895–928 (AEYREAPRSSSTKRTFVSKTRHSPLEEPIHDRNE) are disordered. Positions 902–912 (RSSSTKRTFVS) are enriched in polar residues. Over residues 917 to 928 (SPLEEPIHDRNE) the composition is skewed to basic and acidic residues.

Requires Zn(2+) as cofactor. As to expression, expressed in pharyngeal, vulva and body wall muscles, intestine and several neurons.

The protein localises to the secreted. Its function is as follows. Metalloprotease. The polypeptide is Zinc metalloproteinase nas-39 (Caenorhabditis elegans).